A 1144-amino-acid chain; its full sequence is Probable translation initiation factor IF-2 (1144 aa).

In terms of domain architecture, DOD-type homing endonuclease spans 232–362; it reads FAGVMFGDGS…LSLLLLRFGI (131 aa). One can recognise a tr-type G domain in the interval 551–768; sequence TTETHNFVAN…LIAGLSQKYL (218 aa). Residues 624–628 and 678–681 contribute to the GTP site; these read DTPGH and NKID.

The protein belongs to the TRAFAC class translation factor GTPase superfamily. Classic translation factor GTPase family. IF-2 subfamily. In terms of processing, this protein undergoes a protein self splicing that involves a post-translational excision of the intervening region (intein) followed by peptide ligation.

In terms of biological role, function in general translation initiation by promoting the binding of the formylmethionine-tRNA to ribosomes. Seems to function along with eIF-2. This chain is Probable translation initiation factor IF-2 (infB), found in Thermococcus kodakarensis (strain ATCC BAA-918 / JCM 12380 / KOD1) (Pyrococcus kodakaraensis (strain KOD1)).